Here is a 470-residue protein sequence, read N- to C-terminus: Uronate isomerase (470 aa).

Belongs to the metallo-dependent hydrolases superfamily. Uronate isomerase family.

The enzyme catalyses D-glucuronate = D-fructuronate. The catalysed reaction is aldehydo-D-galacturonate = keto-D-tagaturonate. It functions in the pathway carbohydrate metabolism; pentose and glucuronate interconversion. In Escherichia coli O157:H7 (strain EC4115 / EHEC), this protein is Uronate isomerase.